A 119-amino-acid polypeptide reads, in one-letter code: Large ribosomal subunit protein uL22 (119 aa).

Belongs to the universal ribosomal protein uL22 family. In terms of assembly, part of the 50S ribosomal subunit.

Its function is as follows. This protein binds specifically to 23S rRNA; its binding is stimulated by other ribosomal proteins, e.g. L4, L17, and L20. It is important during the early stages of 50S assembly. It makes multiple contacts with different domains of the 23S rRNA in the assembled 50S subunit and ribosome. In terms of biological role, the globular domain of the protein is located near the polypeptide exit tunnel on the outside of the subunit, while an extended beta-hairpin is found that lines the wall of the exit tunnel in the center of the 70S ribosome. In Rhodopirellula baltica (strain DSM 10527 / NCIMB 13988 / SH1), this protein is Large ribosomal subunit protein uL22.